The primary structure comprises 1099 residues: Protein transport protein Sec24A (1099 aa).

Disordered stretches follow at residues methionine 1 to glutamine 36, lysine 65 to alanine 139, and serine 279 to proline 317. Composition is skewed to polar residues over residues glycine 10–asparagine 20, asparagine 68–glycine 90, serine 108–alanine 126, serine 279–valine 292, and tyrosine 303–proline 317. Residues cysteine 437, cysteine 440, cysteine 458, and cysteine 461 each coordinate Zn(2+). The interval cysteine 437–cysteine 461 is zinc finger-like. Residues proline 972 to phenylalanine 1044 form a Gelsolin-like repeat.

It belongs to the SEC23/SEC24 family. SEC24 subfamily. As to quaternary structure, COPII is composed of at least five proteins: the Sec23/24 complex, the Sec13/31 complex and Sar1. Interacts with TMED2. Interacts (as part of the Sec23/24 complex) with SEC22B; recruits SEC22B into COPII-coated vesicles for its transport from the endoplasmic reticulum to the Golgi. Interacts with STING1; promoting STING1 translocation to COPII vesicles in a STEEP1-dependent manner. Interacts with TMEM39A. Interacts with SACM1L; this interaction is reduced in the absence of TMEM39A. Interacts with kinase FAM20C; transport of FAM20C from the endoplasmic reticulum to the Golgi is likely to be mediated by COPII vesicles.

It localises to the cytoplasmic vesicle. Its subcellular location is the COPII-coated vesicle membrane. The protein localises to the endoplasmic reticulum membrane. The protein resides in the cytoplasm. It is found in the cytosol. In terms of biological role, component of the coat protein complex II (COPII) which promotes the formation of transport vesicles from the endoplasmic reticulum (ER). The coat has two main functions, the physical deformation of the endoplasmic reticulum membrane into vesicles and the selection of cargo molecules for their transport to the Golgi complex. Plays a central role in cargo selection within the COPII complex and together with SEC24B may have a different specificity compared to SEC24C and SEC24D. May package preferentially cargos with cytoplasmic DxE or LxxLE motifs and may also recognize conformational epitopes. The chain is Protein transport protein Sec24A from Bos taurus (Bovine).